The primary structure comprises 205 residues: 3-isopropylmalate dehydratase small subunit (205 aa).

This sequence belongs to the LeuD family. LeuD type 1 subfamily. As to quaternary structure, heterodimer of LeuC and LeuD.

The enzyme catalyses (2R,3S)-3-isopropylmalate = (2S)-2-isopropylmalate. It participates in amino-acid biosynthesis; L-leucine biosynthesis; L-leucine from 3-methyl-2-oxobutanoate: step 2/4. Functionally, catalyzes the isomerization between 2-isopropylmalate and 3-isopropylmalate, via the formation of 2-isopropylmaleate. In Buchnera aphidicola subsp. Thelaxes suberi, this protein is 3-isopropylmalate dehydratase small subunit (leuD).